The chain runs to 127 residues: Small ribosomal subunit protein eS8 (127 aa).

Belongs to the eukaryotic ribosomal protein eS8 family. As to quaternary structure, part of the 30S ribosomal subunit.

The chain is Small ribosomal subunit protein eS8 from Nanoarchaeum equitans (strain Kin4-M).